We begin with the raw amino-acid sequence, 529 residues long: Cytochrome P450 monooxygenase oblE (529 aa).

A helical transmembrane segment spans residues 38–58; that stretch reads WQYIVTLLIAIITYDQVMYIW. C477 provides a ligand contact to heme.

It belongs to the cytochrome P450 family. Requires heme as cofactor.

Its subcellular location is the membrane. Its pathway is secondary metabolite biosynthesis; terpenoid biosynthesis. Functionally, cytochrome P450 monooxygenase; part of the gene cluster that mediates the biosynthesis of the sesterterpenes ophiobolins, fungal phytotoxins with potential anti-cancer activities. The first step of the pathway is performed by the sesterterpene synthase oblA that possesses both prenyl transferase and terpene cyclase activity, converting isopentenyl diphosphate and dimethylallyl diphosphate into geranylfarnesyl diphosphate (GFPP) and further converting GFPP into ophiobolin F, respectively. Other sesterterpenoids (C(25) terpenoids) are found as minor products of oblA. The cytochrome P450 monooxygenase oblB then catalyzes a four-step oxidative transformation of ophiobolin F to yield ophiobolin C. The function of the cytochrome P450 monooxygenase oblE has still to be determined. This chain is Cytochrome P450 monooxygenase oblE, found in Emericella variicolor (Aspergillus stellatus).